The sequence spans 675 residues: Cysteine-rich receptor-like protein kinase 25 (675 aa).

The N-terminal stretch at 1–25 (MSSCFKSSVSLFSVFLFMILKTVTS) is a signal peptide. At 26–281 (DPTYLYHICP…IPSEKGKGKN (256 aa)) the chain is on the extracellular side. Gnk2-homologous domains lie at 28 to 134 (TYLY…NQSI) and 140 to 247 (IRPG…LYPF). N-linked (GlcNAc...) asparagine glycans are attached at residues N36, N43, N77, N106, N131, N151, N161, N188, N249, and N281. A helical transmembrane segment spans residues 282–302 (LTVIVTAIAVPVSVCVLLLGA). Residues 303 to 675 (MCWLLARRRN…DSSITIVYPR (373 aa)) lie on the Cytoplasmic side of the membrane. The 276-residue stretch at 347-622 (FSESNKLGHG…DILVMMNSFT (276 aa)) folds into the Protein kinase domain. Residues 353–361 (LGHGGFGEV) and K375 contribute to the ATP site. Y420 is subject to Phosphotyrosine. D472 (proton acceptor) is an active-site residue. At S476 the chain carries Phosphoserine. T512 carries the phosphothreonine modification. At Y520 the chain carries Phosphotyrosine. Positions 638–661 (MKDSRDPRSGGSASDHSATSKSLP) are disordered. Positions 648–661 (GSASDHSATSKSLP) are enriched in polar residues.

This sequence belongs to the protein kinase superfamily. Ser/Thr protein kinase family. CRK subfamily.

Its subcellular location is the membrane. The enzyme catalyses L-seryl-[protein] + ATP = O-phospho-L-seryl-[protein] + ADP + H(+). It carries out the reaction L-threonyl-[protein] + ATP = O-phospho-L-threonyl-[protein] + ADP + H(+). The chain is Cysteine-rich receptor-like protein kinase 25 (CRK25) from Arabidopsis thaliana (Mouse-ear cress).